The sequence spans 74 residues: Small ribosomal subunit protein bS21 (74 aa).

This sequence belongs to the bacterial ribosomal protein bS21 family.

The sequence is that of Small ribosomal subunit protein bS21 from Coxiella burnetii (strain Dugway 5J108-111).